A 247-amino-acid polypeptide reads, in one-letter code: Uridylate kinase (247 aa).

15-18 contributes to the ATP binding site; sequence KLSG. Residues 23 to 28 form an involved in allosteric activation by GTP region; sequence GDEGFG. Gly57 contributes to the UMP binding site. ATP contacts are provided by Gly58 and Arg62. UMP contacts are provided by residues Asp77 and 138–145; that span reads TGNPFFTT. ATP is bound by residues Thr165, Tyr171, and Asp174.

It belongs to the UMP kinase family. Homohexamer.

It is found in the cytoplasm. It catalyses the reaction UMP + ATP = UDP + ADP. It functions in the pathway pyrimidine metabolism; CTP biosynthesis via de novo pathway; UDP from UMP (UMPK route): step 1/1. With respect to regulation, allosterically activated by GTP. Inhibited by UTP. In terms of biological role, catalyzes the reversible phosphorylation of UMP to UDP. This chain is Uridylate kinase, found in Colwellia psychrerythraea (strain 34H / ATCC BAA-681) (Vibrio psychroerythus).